A 463-amino-acid chain; its full sequence is Pentatricopeptide repeat-containing protein At2g17670 (463 aa).

The tract at residues 1–63 (MGKVPSSFRS…PSLRNPFKSP (63 aa)) is disordered. PPR repeat units follow at residues 121–157 (GRST…GLEP), 158–192 (DQVT…HSPP), 193–223 (DTYT…MRDD), 229–263 (DLVS…GFKP), 264–298 (DCFL…GVEP), 299–333 (DQIT…GYEP), 334–368 (DTAT…GCAP), 369–403 (NDCT…GVKL), and 404–438 (ESNG…KSLS).

This sequence belongs to the PPR family. P subfamily.

The protein is Pentatricopeptide repeat-containing protein At2g17670 of Arabidopsis thaliana (Mouse-ear cress).